The following is a 72-amino-acid chain: MAAKKKLLAELREKSLVELDAFIHENKKALFSLRAEAALQNKVVKKHLFSMYKKNIARSMTVMQEKEGKIDG.

Belongs to the universal ribosomal protein uL29 family.

This chain is Large ribosomal subunit protein uL29, found in Chlamydia caviae (strain ATCC VR-813 / DSM 19441 / 03DC25 / GPIC) (Chlamydophila caviae).